Consider the following 155-residue polypeptide: Putative pre-16S rRNA nuclease (155 aa).

It belongs to the YqgF nuclease family.

It is found in the cytoplasm. Its function is as follows. Could be a nuclease involved in processing of the 5'-end of pre-16S rRNA. This chain is Putative pre-16S rRNA nuclease, found in Wolbachia sp. subsp. Drosophila simulans (strain wRi).